The sequence spans 880 residues: Dynamin-like protein A (880 aa).

A disordered region spans residues 1 to 124; that stretch reads MSVFKKKDKS…QVELERKRRD (124 aa). The segment covering 8 to 20 has biased composition (basic and acidic residues); the sequence is DKSDDKKKKHDEE. The span at 22–31 shows a compositional bias: polar residues; that stretch reads PQGTFQPASQ. Residues 32–68 are compositionally biased toward low complexity; it reads STSNTNLNSLASSVNNGASVGSTNGSTPNNSNGSTPT. The stretch at 69–152 forms a coiled coil; the sequence is YNHNNSAEEL…NEQVEISSLE (84 aa). Basic and acidic residues-rich tracts occupy residues 77-94 and 103-124; these read ELEK…KSEL and KKKE…KRRD. In terms of domain architecture, Dynamin-type G spans 191-478; it reads AVSHPEIVFV…VWKSYQDTIP (288 aa). The interval 201–208 is G1 motif; the sequence is GPRSSGKS. Position 201–208 (201–208) interacts with GTP; sequence GPRSSGKS. A G2 motif region spans residues 227–240; it reads IVGVGGSNANGCSK. The segment at 315–318 is G3 motif; it reads DSPG. GTP is bound by residues 315 to 319 and 380 to 383; these read DSPGL and TKFH. The G4 motif stretch occupies residues 380–383; sequence TKFH. The tract at residues 413–416 is G5 motif; it reads LPNH. A coiled-coil region spans residues 479 to 509; it reads RILKHLRSKRQTAEATLNELQKQSSSLDSTK. Positions 532–543 are enriched in polar residues; that stretch reads TSEGNPSANGQT. The segment at 532–551 is disordered; it reads TSEGNPSANGQTLDEEKSQQ. A coiled-coil region spans residues 824–861; the sequence is SNEQLEQLFEVQATREQLKQEEKKQQQILEKYSQIDEQ.

The protein belongs to the TRAFAC class dynamin-like GTPase superfamily. Dynamin/Fzo/YdjA family.

It is found in the cytoplasm. The protein resides in the cleavage furrow. The enzyme catalyses GTP + H2O = GDP + phosphate + H(+). Its function is as follows. Involved in cytokinesis. May hydrolyze GTP. The chain is Dynamin-like protein A (dlpA) from Dictyostelium discoideum (Social amoeba).